The following is a 171-amino-acid chain: Nucleoside-triphosphatase THEP1 (171 aa).

ATP is bound by residues 8–15 (GPPGAGKS) and 95–102 (VYLIDEIG).

This sequence belongs to the THEP1 NTPase family.

The enzyme catalyses a ribonucleoside 5'-triphosphate + H2O = a ribonucleoside 5'-diphosphate + phosphate + H(+). Functionally, has nucleotide phosphatase activity towards ATP, GTP, CTP, TTP and UTP. May hydrolyze nucleoside diphosphates with lower efficiency. The sequence is that of Nucleoside-triphosphatase THEP1 from Ignicoccus hospitalis (strain KIN4/I / DSM 18386 / JCM 14125).